We begin with the raw amino-acid sequence, 543 residues long: Plant intracellular Ras-group-related LRR protein 5 (543 aa).

LRR repeat units lie at residues 239-262 (LQDV…IGSL), 264-284 (YLTK…AFGE), 285-307 (LSNL…SFGN), 309-331 (TSLA…LGKL), 332-354 (ANLR…IGSC), 356-377 (SLVE…IGKL), 378-400 (EKLE…VGSL), 402-424 (RLRE…CFAT), 426-448 (LVKL…IGNL), and 449-470 (EMLE…SFRC). Residues 472–494 (SRLRVFHADETPLEFPPREVVKL) form an LRR 11; degenerate repeat. A GVYW; degenerate motif is present at residues 495–502 (GAQAVVKY).

This sequence belongs to the SHOC2 family. In terms of tissue distribution, widely expressed.

Functionally, leucine-rich repeat protein that likely mediates protein interactions, possibly in the context of signal transduction. The sequence is that of Plant intracellular Ras-group-related LRR protein 5 (IRL5) from Oryza sativa subsp. japonica (Rice).